The chain runs to 59 residues: Large ribosomal subunit protein bL32c (59 aa).

A disordered region spans residues Ser-37–Lys-59.

The protein belongs to the bacterial ribosomal protein bL32 family.

It localises to the plastid. Its subcellular location is the chloroplast. The chain is Large ribosomal subunit protein bL32c from Hordeum vulgare (Barley).